The chain runs to 321 residues: tRNA 2-thiolation protein NcsA (321 aa).

Lys204 participates in a covalent cross-link: Glycyl lysine isopeptide (Lys-Gly) (interchain with G-Cter in SAMP2).

The protein belongs to the TtcA family. CTU1/NCS6/ATPBD3 subfamily. As to quaternary structure, interacts with monomeric and polymeric forms of SAMP2. Interacts with UbaA. Interacts with archaeal EF-1-alpha and Pan1. Non-sampylated protein forms a complex with archaeal CPSF1 of approximately 100 kDa. In terms of processing, sampylated at Lys-204 with the archaeal ubiquitin-like protein SAMP2. Polymeric chains of SAMP2 are also linked.

It participates in tRNA modification; 5-methoxycarbonylmethyl-2-thiouridine-tRNA biosynthesis. Required for thiolation of mcm(5)S(2)U at the wobble uridine position of tRNA specific for lysine (tRNA(Lys)). Probably acts by catalyzing adenylation of tRNA, an intermediate required for 2-thiolation. May also act as a sulfurtransferase that transfers sulfur from thiocarboxylated SAMP2 onto the uridine of tRNA at wobble position. Required for cell growth at elevated temperatures. The sequence is that of tRNA 2-thiolation protein NcsA from Haloferax volcanii (strain ATCC 29605 / DSM 3757 / JCM 8879 / NBRC 14742 / NCIMB 2012 / VKM B-1768 / DS2) (Halobacterium volcanii).